We begin with the raw amino-acid sequence, 301 residues long: MLTSGLTNAPITKLLLIYTIASSIALSILDIKHLASIHVSPHLWPYAQFWRLATWQLAGFTNSTEALFAAMLAYHLRVVERAWGKRKFATFIISTLPYTSLLPPLLLVLLRPLTLYKLNYLPCGPTATLFALLAQYHAGIPHTFRYRISTSTSTSTSSANRDTDASGRGEGAQGKHLTLLLSDKSTTYLVAAQLALSQFPGMMLPAAVGWVVGVAWRAEVLPVPSARWRVPAWAVGEKEMGRRGTQGGEGGERYEDLRRRLEGEAVAAAAAASGNAGSASEASGQRQRRREGGIMDRLRAL.

A run of 3 helical transmembrane segments spans residues 9 to 29 (APIT…LSIL), 52 to 72 (LATW…AAML), and 90 to 110 (TFII…LVLL). A compositionally biased stretch (low complexity) spans 268–284 (AAAAASGNAGSASEASG). Residues 268–301 (AAAAASGNAGSASEASGQRQRRREGGIMDRLRAL) form a disordered region. The span at 290-301 (REGGIMDRLRAL) shows a compositional bias: basic and acidic residues.

Component of the DSC E3 ubiquitin ligase complex composed of dscA, dscB, dscC and dscD.

It is found in the endoplasmic reticulum membrane. The catalysed reaction is S-ubiquitinyl-[E2 ubiquitin-conjugating enzyme]-L-cysteine + [acceptor protein]-L-lysine = [E2 ubiquitin-conjugating enzyme]-L-cysteine + N(6)-ubiquitinyl-[acceptor protein]-L-lysine.. It participates in protein modification; protein ubiquitination. Component of the DSC E3 ubiquitin ligase complex which is required for the srbA transcriptional activator proteolytic cleavage to release the soluble transcription factor from the membrane in low oxygen or sterol conditions. Required for growth during hypoxia and triazole drug susceptibility, as well as for virulence in a murine model of invasive pulmonary aspergillosis (IPA). In Aspergillus fumigatus (strain ATCC MYA-4609 / CBS 101355 / FGSC A1100 / Af293) (Neosartorya fumigata), this protein is DSC E3 ubiquitin ligase complex subunit B.